The following is a 271-amino-acid chain: Ribosomal RNA small subunit methyltransferase A (271 aa).

S-adenosyl-L-methionine-binding residues include His-11, Leu-13, Gly-38, Glu-58, Asp-86, and Asn-101.

It belongs to the class I-like SAM-binding methyltransferase superfamily. rRNA adenine N(6)-methyltransferase family. RsmA subfamily.

The protein resides in the cytoplasm. The enzyme catalyses adenosine(1518)/adenosine(1519) in 16S rRNA + 4 S-adenosyl-L-methionine = N(6)-dimethyladenosine(1518)/N(6)-dimethyladenosine(1519) in 16S rRNA + 4 S-adenosyl-L-homocysteine + 4 H(+). Functionally, specifically dimethylates two adjacent adenosines (A1518 and A1519) in the loop of a conserved hairpin near the 3'-end of 16S rRNA in the 30S particle. May play a critical role in biogenesis of 30S subunits. In Helicobacter pylori (strain G27), this protein is Ribosomal RNA small subunit methyltransferase A.